Consider the following 137-residue polypeptide: Small ribosomal subunit protein uS12 (137 aa).

The interval 1 to 57 (MPTINQLVRKPRKSKVEKSKSPALNVGYNSRKKVQTNVSSPQKRGVATRVGTMTPKK) is disordered. Asp-102 is modified (3-methylthioaspartic acid).

The protein belongs to the universal ribosomal protein uS12 family. Part of the 30S ribosomal subunit. Contacts proteins S8 and S17. May interact with IF1 in the 30S initiation complex.

Its function is as follows. With S4 and S5 plays an important role in translational accuracy. Interacts with and stabilizes bases of the 16S rRNA that are involved in tRNA selection in the A site and with the mRNA backbone. Located at the interface of the 30S and 50S subunits, it traverses the body of the 30S subunit contacting proteins on the other side and probably holding the rRNA structure together. The combined cluster of proteins S8, S12 and S17 appears to hold together the shoulder and platform of the 30S subunit. The sequence is that of Small ribosomal subunit protein uS12 from Streptococcus suis (strain 98HAH33).